Consider the following 245-residue polypeptide: Acetylglutamate kinase (245 aa).

Substrate-binding positions include 41 to 42, Arg-63, and Asn-156; that span reads GG.

The protein belongs to the acetylglutamate kinase family. ArgB subfamily.

Its subcellular location is the cytoplasm. It carries out the reaction N-acetyl-L-glutamate + ATP = N-acetyl-L-glutamyl 5-phosphate + ADP. Its pathway is amino-acid biosynthesis; L-arginine biosynthesis; N(2)-acetyl-L-ornithine from L-glutamate: step 2/4. Its function is as follows. Catalyzes the ATP-dependent phosphorylation of N-acetyl-L-glutamate. This chain is Acetylglutamate kinase, found in Streptococcus mutans serotype c (strain ATCC 700610 / UA159).